Reading from the N-terminus, the 326-residue chain is Protease HtpX homolog (326 aa).

2 helical membrane-spanning segments follow: residues 10–30 (LNMALATLGIVLLGFALALAV) and 41–61 (VGLMLSILMFIFFLNIIQWLF). Residue histidine 147 participates in Zn(2+) binding. The active site involves glutamate 148. Zn(2+) is bound at residue histidine 151. Transmembrane regions (helical) follow at residues 159–179 (LLMAVGLIPALIYYLGWWIFW) and 197–217 (LLFLIGIAMMAVSFVFQLLVL). Glutamate 224 contacts Zn(2+).

Belongs to the peptidase M48B family. Zn(2+) serves as cofactor.

The protein localises to the cell membrane. The polypeptide is Protease HtpX homolog (Saccharolobus islandicus (strain Y.N.15.51 / Yellowstone #2) (Sulfolobus islandicus)).